A 2178-amino-acid chain; its full sequence is Genome polyprotein (2178 aa).

Positions 1–20 (MGAQVSTQKSGSHENQNILT) are disordered. Glycine 2 carries the N-myristoyl glycine; by host lipid modification. Residues 2 to 1490 (GAQVSTQKSG…AVNQASMIIN (1489 aa)) lie on the Cytoplasmic side of the membrane. Residues 564 to 584 (ALTEGLSDELEEVIVEKTKQT) form an amphipathic alpha-helix region. Residues histidine 875 and aspartate 893 each act as for protease 2A activity in the active site. Zn(2+) contacts are provided by cysteine 910 and cysteine 912. Cysteine 964 acts as the For protease 2A activity in catalysis. Residues cysteine 970 and histidine 972 each coordinate Zn(2+). Residues 1100 to 1172 (NDGWFRKFND…HDSNPTQEKR (73 aa)) form a membrane-binding region. The oligomerization stretch occupies residues 1100–1238 (NDGWFRKFND…TPGSGKSLTT (139 aa)). Residues 1121-1125 (ANKIS) form an RNA-binding region. The region spanning 1204–1360 (KNKITNYMQF…STYTKNGKLN (157 aa)) is the SF3 helicase domain. Positions 1368, 1371, 1380, and 1385 each coordinate Zn(2+). The segment at 1368 to 1385 (CKDCHQPSNFKKCCPLVC) adopts a C4-type zinc-finger fold. Residues 1412–1419 (DYKNKVKI) form an RNA-binding region. The segment at 1423–1428 (LEVLFQ) is oligomerization. The stretch at 1491–1506 (TILMFVSTLGIVYVIY) is an intramembrane region. Residues 1507–2178 (KLFAQTQGPY…VLRRRWLDLF (672 aa)) are Cytoplasmic-facing. At tyrosine 1516 the chain carries O-(5'-phospho-RNA)-tyrosine. The Peptidase C3 domain occupies 1537–1714 (GPNTEFALSL…FSAQLKKQYF (178 aa)). Residues histidine 1576, glutamate 1607, and cysteine 1682 each act as for protease 3C activity in the active site. The 114-residue stretch at 1946-2059 (HLMAFDYSNF…SYPFELDSNI (114 aa)) folds into the RdRp catalytic domain. 2 residues coordinate Mg(2+): aspartate 1951 and aspartate 2045.

It belongs to the picornaviruses polyprotein family. Interacts with capsid protein VP1 and capsid protein VP3 to form heterotrimeric protomers. In terms of assembly, interacts with capsid protein VP0, and capsid protein VP3 to form heterotrimeric protomers. Five protomers subsequently associate to form pentamers which serve as building blocks for the capsid. Interacts with capsid protein VP2, capsid protein VP3 and capsid protein VP4 following cleavage of capsid protein VP0. As to quaternary structure, interacts with capsid protein VP1 and capsid protein VP3 in the mature capsid. Interacts with capsid protein VP0 and capsid protein VP1 to form heterotrimeric protomers. Five protomers subsequently associate to form pentamers which serve as building blocks for the capsid. Interacts with capsid protein VP4 in the mature capsid. Interacts with protein 2C; this interaction may be important for virion morphogenesis. In terms of assembly, interacts with capsid protein VP1 and capsid protein VP3. As to quaternary structure, homodimer. Homohexamer; forms a hexameric ring structure with 6-fold symmetry characteristic of AAA+ ATPases. Interacts (via N-terminus) with host RTN3 (via reticulon domain); this interaction is important for viral replication. Interacts with capsid protein VP3; this interaction may be important for virion morphogenesis. In terms of assembly, interacts with protein 3CD. As to quaternary structure, homodimer. Interacts with host GBF1. Interacts (via GOLD domain) with host ACBD3 (via GOLD domain); this interaction allows the formation of a viral protein 3A/ACBD3 heterotetramer with a 2:2 stoichiometry, which will stimulate the recruitment of host PI4KB in order to synthesize PI4P at the viral RNA replication sites. Interacts with RNA-directed RNA polymerase. In terms of assembly, interacts with protein 3AB and with RNA-directed RNA polymerase. As to quaternary structure, interacts with Viral protein genome-linked and with protein 3CD. Mg(2+) serves as cofactor. In terms of processing, specific enzymatic cleavages in vivo by the viral proteases yield processing intermediates and the mature proteins. Post-translationally, myristoylation is required for the formation of pentamers during virus assembly. Further assembly of 12 pentamers and a molecule of genomic RNA generates the provirion. During virion maturation, immature virions are rendered infectious following cleavage of VP0 into VP4 and VP2. This maturation seems to be an autocatalytic event triggered by the presence of RNA in the capsid and it is followed by a conformational change infectious virion. In terms of processing, myristoylation is required during RNA encapsidation and formation of the mature virus particle. Post-translationally, VPg is uridylylated by the polymerase into VPg-pUpU. This acts as a nucleotide-peptide primer for the genomic RNA replication.

It localises to the virion. Its subcellular location is the host cytoplasm. The protein localises to the host cytoplasmic vesicle membrane. The protein resides in the host nucleus. The catalysed reaction is a ribonucleoside 5'-triphosphate + H2O = a ribonucleoside 5'-diphosphate + phosphate + H(+). The enzyme catalyses Selective cleavage of Tyr-|-Gly bond in the picornavirus polyprotein.. It catalyses the reaction RNA(n) + a ribonucleoside 5'-triphosphate = RNA(n+1) + diphosphate. It carries out the reaction Selective cleavage of Gln-|-Gly bond in the poliovirus polyprotein. In other picornavirus reactions Glu may be substituted for Gln, and Ser or Thr for Gly.. Its activity is regulated as follows. Replication or transcription is subject to high level of random mutations by the nucleotide analog ribavirin. In terms of biological role, forms an icosahedral capsid of pseudo T=3 symmetry with capsid proteins VP2 and VP3. The capsid is 300 Angstroms in diameter, composed of 60 copies of each capsid protein and enclosing the viral positive strand RNA genome. Capsid protein VP1 mainly forms the vertices of the capsid. Capsid protein VP1 interacts with host cell receptor to provide virion attachment to target host cells. This attachment induces virion internalization. Tyrosine kinases are probably involved in the entry process. After binding to its receptor, the capsid undergoes conformational changes. Capsid protein VP1 N-terminus (that contains an amphipathic alpha-helix) and capsid protein VP4 are externalized. Together, they shape a pore in the host membrane through which viral genome is translocated to host cell cytoplasm. Forms an icosahedral capsid of pseudo T=3 symmetry with capsid proteins VP2 and VP3. The capsid is 300 Angstroms in diameter, composed of 60 copies of each capsid protein and enclosing the viral positive strand RNA genome. Its function is as follows. Lies on the inner surface of the capsid shell. After binding to the host receptor, the capsid undergoes conformational changes. Capsid protein VP4 is released, Capsid protein VP1 N-terminus is externalized, and together, they shape a pore in the host membrane through which the viral genome is translocated into the host cell cytoplasm. Functionally, component of immature procapsids, which is cleaved into capsid proteins VP4 and VP2 after maturation. Allows the capsid to remain inactive before the maturation step. In terms of biological role, cysteine protease that cleaves viral polyprotein and specific host proteins. It is responsible for the autocatalytic cleavage between the P1 and P2 regions, which is the first cleavage occurring in the polyprotein. Also cleaves the host translation initiation factor EIF4G1, in order to shut down the capped cellular mRNA translation. Inhibits the host nucleus-cytoplasm protein and RNA trafficking by cleaving host members of the nuclear pores. Counteracts stress granule formation probably by antagonizing its assembly or promoting its dissassembly. Plays an essential role in the virus replication cycle by acting as a viroporin. Creates a pore in the host endoplasmic reticulum and as a consequence releases Ca2+ in the cytoplasm of infected cell. In turn, high levels of cytoplasmic calcium may trigger membrane trafficking and transport of viral ER-associated proteins to viroplasms, sites of viral genome replication. Its function is as follows. Induces and associates with structural rearrangements of intracellular membranes. Displays RNA-binding, nucleotide binding and NTPase activities. May play a role in virion morphogenesis and viral RNA encapsidation by interacting with the capsid protein VP3. Functionally, localizes the viral replication complex to the surface of membranous vesicles. Together with protein 3CD binds the Cis-Active RNA Element (CRE) which is involved in RNA synthesis initiation. Acts as a cofactor to stimulate the activity of 3D polymerase, maybe through a nucleid acid chaperone activity. In terms of biological role, localizes the viral replication complex to the surface of membranous vesicles. It inhibits host cell endoplasmic reticulum-to-Golgi apparatus transport and causes the disassembly of the Golgi complex, possibly through GBF1 interaction. This would result in depletion of MHC, trail receptors and IFN receptors at the host cell surface. Plays an essential role in viral RNA replication by recruiting ACBD3 and PI4KB at the viral replication sites, thereby allowing the formation of the rearranged membranous structures where viral replication takes place. Acts as a primer for viral RNA replication and remains covalently bound to viral genomic RNA. VPg is uridylylated prior to priming replication into VPg-pUpU. The oriI viral genomic sequence may act as a template for this. The VPg-pUpU is then used as primer on the genomic RNA poly(A) by the RNA-dependent RNA polymerase to replicate the viral genome. During genome replication, the VPg-RNA linkage is removed by the host TDP2, thereby accelerating replication. During the late stage of the replication cycle, host TDP2 is excluded from sites of viral RNA synthesis and encapsidation, allowing for the generation of progeny virions. Its function is as follows. Involved in the viral replication complex and viral polypeptide maturation. It exhibits protease activity with a specificity and catalytic efficiency that is different from protease 3C. Protein 3CD lacks polymerase activity. Protein 3CD binds to the 5'UTR of the viral genome. Functionally, replicates the viral genomic RNA on the surface of intracellular membranes. May form linear arrays of subunits that propagate along a strong head-to-tail interaction called interface-I. Covalently attaches UMP to a tyrosine of VPg, which is used to prime RNA synthesis. The positive stranded RNA genome is first replicated at virus induced membranous vesicles, creating a dsRNA genomic replication form. This dsRNA is then used as template to synthesize positive stranded RNA genomes. ss(+)RNA genomes are either translated, replicated or encapsidated. In terms of biological role, major viral protease that mediates proteolytic processing of the polyprotein. Cleaves host EIF5B, contributing to host translation shutoff. Also cleaves host PABPC1, contributing to host translation shutoff. Cleaves host NLRP1, triggers host N-glycine-mediated degradation of the autoinhibitory NLRP1 N-terminal fragment. This is Genome polyprotein from Homo sapiens (Human).